A 469-amino-acid chain; its full sequence is D-3-phosphoglycerate dehydrogenase 1 (469 aa).

Serine 22, serine 29, and serine 33 each carry phosphoserine. Residues 208-209, aspartate 228, 285-287, and aspartate 311 each bind NAD(+); these read HI and ASR. Residue arginine 287 is part of the active site. Residue glutamate 316 is part of the active site. Histidine 347 serves as the catalytic Proton donor. 347–350 contributes to the NAD(+) binding site; sequence HIGG. Residues 399 to 469 enclose the ACT domain; that stretch reads RVLYIHQNVP…SAKISIRLLY (71 aa).

It belongs to the D-isomer specific 2-hydroxyacid dehydrogenase family.

The enzyme catalyses (2R)-3-phosphoglycerate + NAD(+) = 3-phosphooxypyruvate + NADH + H(+). The catalysed reaction is (R)-2-hydroxyglutarate + NAD(+) = 2-oxoglutarate + NADH + H(+). Its pathway is amino-acid biosynthesis; L-serine biosynthesis; L-serine from 3-phospho-D-glycerate: step 1/3. In terms of biological role, catalyzes the reversible oxidation of 3-phospho-D-glycerate to 3-phosphonooxypyruvate, the first step of the phosphorylated L-serine biosynthesis pathway. Also catalyzes the reversible oxidation of 2-hydroxyglutarate to 2-oxoglutarate. In Saccharomyces cerevisiae (strain ATCC 204508 / S288c) (Baker's yeast), this protein is D-3-phosphoglycerate dehydrogenase 1 (SER3).